The following is a 212-amino-acid chain: MIIAIDGPAASGKGTLGKRLAAHYGFRHLDTGVIYRAVAKALLDGGADLTDQAQAIAAAQGLDPGLFGDPALKSQTVGDAASVISAYPKVREVLVGFQRQFAAEPPGAVLDGRDIGTVICPDADVKIFVVADPGVRARRRALEAQARGEPADEAVILADILRRDERDKGRSAAPLKQAPDAVLLDNSNLDIEGGVRAAIAIVEAVRAGRRRV.

7-15 (GPAASGKGT) serves as a coordination point for ATP.

This sequence belongs to the cytidylate kinase family. Type 1 subfamily.

It is found in the cytoplasm. The catalysed reaction is CMP + ATP = CDP + ADP. It carries out the reaction dCMP + ATP = dCDP + ADP. The chain is Cytidylate kinase from Rhodopseudomonas palustris (strain HaA2).